A 313-amino-acid polypeptide reads, in one-letter code: B3 domain-containing transcription factor FUS3 (313 aa).

Residues Phe92–Ser194 constitute a DNA-binding region (TF-B3).

Interacts with KIN10. In terms of processing, phosphorylation by KIN10 increases its stability. Phosphorylated at one or more of the Ser-55, Ser-56 and/or Ser-57 residues. In terms of tissue distribution, expressed in cotyledons and hypocotyls.

The protein localises to the nucleus. With respect to regulation, phosphorylation by KIN10 is required to positively regulates embryogenesis, seed yield, and plant growth at high temperature. In terms of biological role, transcription regulator involved in gene regulation during late embryogenesis. Its expression to the epidermis is sufficient to control foliar organ identity by regulating positively the synthesis abscisic acid (ABA) and negatively gibberellin production. Negatively regulates TTG1 in the embryo. Positively regulates the abundance of the ABI3 protein in the seed. Cooperates with KIN10 to regulate developmental phase transitions and lateral organ development and act both as positive regulators of abscisic acid (ABA) signaling during germination. The polypeptide is B3 domain-containing transcription factor FUS3 (FUS3) (Arabidopsis thaliana (Mouse-ear cress)).